A 494-amino-acid polypeptide reads, in one-letter code: Keratin, type I cytoskeletal 12 (494 aa).

A compositionally biased stretch (polar residues) spans 1–12; the sequence is MDLSNNTMSLSV. The segment at 1–32 is disordered; the sequence is MDLSNNTMSLSVRTPGLSRRLSSQSVIGRPRG. The segment at 1 to 124 is head; the sequence is MDLSNNTMSL…GNDGGLLSGS (124 aa). The tract at residues 125–160 is coil 1A; it reads EKETMQNLNDRLASYLDKVRALEEANTELENKIREW. The IF rod domain maps to 125-440; sequence EKETMQNLND…RLLDGEAQGD (316 aa). The linker 1 stretch occupies residues 164–182; that stretch reads RGTGTADASQSDYSKYYPL. Residues 183–274 form a coil 1B region; it reads IEDLRNKIIS…KNHEDELQSF (92 aa). The interval 275–297 is linker 12; the sequence is RVGGPGEVSVEMDAAPGVDLTRL. The interval 298-435 is coil 2; sequence LNDMRAQYET…IETYRRLLDG (138 aa). The interval 436–494 is tail; sequence EAQGDGLEESLFVTDSKSQAQSTDSSKDPTKTRKIKTVVQEMVNGEVVSSQVQEIEELM. Positions 446–468 are disordered; it reads LFVTDSKSQAQSTDSSKDPTKTR. Residues 448-459 show a composition bias toward polar residues; the sequence is VTDSKSQAQSTD.

Belongs to the intermediate filament family. As to quaternary structure, heterotetramer of two type I and two type II keratins. Keratin-3 associates with keratin-12. Expressed in the corneal epithelium (at protein level).

In terms of biological role, involved in corneal epithelium organization, integrity and corneal keratin expression. The polypeptide is Keratin, type I cytoskeletal 12 (KRT12) (Homo sapiens (Human)).